The following is an 88-amino-acid chain: MANTASAKKMTRKIAKRTAINRSRRSRMRTFVRKVEEAIASGNQQDALAALRAAEPEMMRAAQHGIVHKNNASRKVSRLAARVKALAA.

Positions 1–27 (MANTASAKKMTRKIAKRTAINRSRRSR) are disordered.

The protein belongs to the bacterial ribosomal protein bS20 family.

Functionally, binds directly to 16S ribosomal RNA. This chain is Small ribosomal subunit protein bS20, found in Methylobacterium radiotolerans (strain ATCC 27329 / DSM 1819 / JCM 2831 / NBRC 15690 / NCIMB 10815 / 0-1).